The sequence spans 343 residues: Holliday junction branch migration complex subunit RuvB (343 aa).

The large ATPase domain (RuvB-L) stretch occupies residues 1–181; that stretch reads MDRIIDSAAT…FGIVQRLEFY (181 aa). ATP-binding positions include Ile20, Arg21, Gly62, Lys65, Thr66, Thr67, 128–130, Arg171, Tyr181, and Arg218; that span reads EDF. Residue Thr66 coordinates Mg(2+). A small ATPAse domain (RuvB-S) region spans residues 182 to 252; the sequence is SPEDLARIVR…VAQAAMQMLK (71 aa). A head domain (RuvB-H) region spans residues 255 to 343; sequence QGGFDELDRR…SAFTDPEDLF (89 aa). The DNA site is built by Arg291, Arg310, and Arg315.

It belongs to the RuvB family. In terms of assembly, homohexamer. Forms an RuvA(8)-RuvB(12)-Holliday junction (HJ) complex. HJ DNA is sandwiched between 2 RuvA tetramers; dsDNA enters through RuvA and exits via RuvB. An RuvB hexamer assembles on each DNA strand where it exits the tetramer. Each RuvB hexamer is contacted by two RuvA subunits (via domain III) on 2 adjacent RuvB subunits; this complex drives branch migration. In the full resolvosome a probable DNA-RuvA(4)-RuvB(12)-RuvC(2) complex forms which resolves the HJ.

The protein resides in the cytoplasm. It catalyses the reaction ATP + H2O = ADP + phosphate + H(+). Its function is as follows. The RuvA-RuvB-RuvC complex processes Holliday junction (HJ) DNA during genetic recombination and DNA repair, while the RuvA-RuvB complex plays an important role in the rescue of blocked DNA replication forks via replication fork reversal (RFR). RuvA specifically binds to HJ cruciform DNA, conferring on it an open structure. The RuvB hexamer acts as an ATP-dependent pump, pulling dsDNA into and through the RuvAB complex. RuvB forms 2 homohexamers on either side of HJ DNA bound by 1 or 2 RuvA tetramers; 4 subunits per hexamer contact DNA at a time. Coordinated motions by a converter formed by DNA-disengaged RuvB subunits stimulates ATP hydrolysis and nucleotide exchange. Immobilization of the converter enables RuvB to convert the ATP-contained energy into a lever motion, pulling 2 nucleotides of DNA out of the RuvA tetramer per ATP hydrolyzed, thus driving DNA branch migration. The RuvB motors rotate together with the DNA substrate, which together with the progressing nucleotide cycle form the mechanistic basis for DNA recombination by continuous HJ branch migration. Branch migration allows RuvC to scan DNA until it finds its consensus sequence, where it cleaves and resolves cruciform DNA. The chain is Holliday junction branch migration complex subunit RuvB from Xylella fastidiosa (strain Temecula1 / ATCC 700964).